We begin with the raw amino-acid sequence, 187 residues long: METLTSSSQSLISSPMSKKDYSSEIICAFDIGAKNPARTVLEVKDNSVRVLDISKLDWSSDWERRIAKDLSQYEYTTVLLERQPRRSPYVKFIYFIKGFLYHTSAAKVICVSPVMSGNSYRDRKKRSVEAFLDWMDTFGLRDSVPDRRKLDDVADSFNLAMRYVLDKWNTNYTPYNRCKSRNYIKKM.

The protein belongs to the RuvC family. Poxviruses-type subfamily. Mg(2+) is required as a cofactor.

In terms of biological role, plays a role in DNA replication by cleaving viral DNA concatamers to yield unit-length viral genomes. The concatamer junctions contain inverted repeat sequences that can be extruded as cruciforms, yielding Holliday junctions that A22 protein cleaves. The polypeptide is Resolvase OPG149 (OPG149) (Vaccinia virus (strain Western Reserve) (VACV)).